A 460-amino-acid polypeptide reads, in one-letter code: NADH-ubiquinone oxidoreductase chain 4 (460 aa).

Transmembrane regions (helical) follow at residues 22–42 (WLWP…ITWL), 61–81 (PLST…LLAS), 94–113 (RMYI…AFGA), 117–139 (IMFY…RWGN), 148–168 (TYFL…LLML), 195–217 (IWWA…HLWL), 225–245 (PVAG…YGMM), 258–278 (MVYP…SICL), 285–304 (SLIA…GILI), 308–330 (WGFT…LFCL), 351–371 (IALP…LALP), 394–414 (LILT…MFLM), and 436–456 (LLMA…ALLW).

This sequence belongs to the complex I subunit 4 family.

It localises to the mitochondrion membrane. The enzyme catalyses a ubiquinone + NADH + 5 H(+)(in) = a ubiquinol + NAD(+) + 4 H(+)(out). In terms of biological role, core subunit of the mitochondrial membrane respiratory chain NADH dehydrogenase (Complex I) that is believed to belong to the minimal assembly required for catalysis. Complex I functions in the transfer of electrons from NADH to the respiratory chain. The immediate electron acceptor for the enzyme is believed to be ubiquinone. The protein is NADH-ubiquinone oxidoreductase chain 4 (MT-ND4) of Gadus morhua (Atlantic cod).